Consider the following 210-residue polypeptide: Imidazoleglycerol-phosphate dehydratase (210 aa).

It belongs to the imidazoleglycerol-phosphate dehydratase family.

It localises to the cytoplasm. The enzyme catalyses D-erythro-1-(imidazol-4-yl)glycerol 3-phosphate = 3-(imidazol-4-yl)-2-oxopropyl phosphate + H2O. The protein operates within amino-acid biosynthesis; L-histidine biosynthesis; L-histidine from 5-phospho-alpha-D-ribose 1-diphosphate: step 6/9. This Mycobacterium bovis (strain ATCC BAA-935 / AF2122/97) protein is Imidazoleglycerol-phosphate dehydratase.